A 351-amino-acid polypeptide reads, in one-letter code: UDP-3-O-acylglucosamine N-acyltransferase (351 aa).

The Proton acceptor role is filled by H239.

This sequence belongs to the transferase hexapeptide repeat family. LpxD subfamily. Homotrimer.

It catalyses the reaction a UDP-3-O-[(3R)-3-hydroxyacyl]-alpha-D-glucosamine + a (3R)-hydroxyacyl-[ACP] = a UDP-2-N,3-O-bis[(3R)-3-hydroxyacyl]-alpha-D-glucosamine + holo-[ACP] + H(+). It functions in the pathway bacterial outer membrane biogenesis; LPS lipid A biosynthesis. Functionally, catalyzes the N-acylation of UDP-3-O-acylglucosamine using 3-hydroxyacyl-ACP as the acyl donor. Is involved in the biosynthesis of lipid A, a phosphorylated glycolipid that anchors the lipopolysaccharide to the outer membrane of the cell. This Vibrio cholerae serotype O1 (strain ATCC 39315 / El Tor Inaba N16961) protein is UDP-3-O-acylglucosamine N-acyltransferase.